The primary structure comprises 1356 residues: Transmembrane protein 94 (1356 aa).

Over 1–64 (MDLKEKHLGE…FLHHSNRCSC (64 aa)) the chain is Cytoplasmic. The helical transmembrane segment at 65-85 (FHWPGASLMLLAVLLLLGCCG) threads the bilayer. Residues 86-92 (GQPAGSR) are Lumenal-facing. Residues 93 to 113 (GVGLVNASALFLLLLLNLVLI) form a helical membrane-spanning segment. The Cytoplasmic segment spans residues 114–273 (GRQDRLKRRE…RPVTALDNER (160 aa)). Phosphoserine occurs at positions 221 and 225. The chain crosses the membrane as a helical span at residues 274 to 294 (FTVQSVMLHYAVPVVLAGFLI). Over 295–320 (TNALRFIFSAPGVTSWQYTLLQLQVN) the chain is Lumenal. Residues 321-341 (GVLPILPLLFPVLWVLATACG) traverse the membrane as a helical segment. The Cytoplasmic portion of the chain corresponds to 342–1092 (EARVLAQMSK…RHATYGIRKC (751 aa)). Positions 417–422 (DKQGIL) match the DKQGIL motif. Disordered stretches follow at residues 439-461 (VEPPHSSHEDLTDGLSTRSFCHP) and 483-541 (EQER…ESDP). Basic and acidic residues predominate over residues 440–449 (EPPHSSHEDL). Phosphoserine is present on residues Ser-444, Ser-445, and Ser-454. Positions 502–511 (HHKAHGRSKH) are enriched in basic residues. 4 positions are modified to phosphoserine: Ser-513, Ser-518, Ser-798, and Ser-941. The helical transmembrane segment at 1093–1113 (FLFLLQCQLTLVVIQFLSCLV) threads the bilayer. The Lumenal portion of the chain corresponds to 1114–1120 (QLPPLLS). The chain crosses the membrane as a helical span at residues 1121–1141 (TTDILWLSCFCYPLLSISLLG). The Cytoplasmic portion of the chain corresponds to 1142–1167 (KPPHSSIMSMATGKNLQSIPKKTQHY). A helical membrane pass occupies residues 1168-1188 (FLLCFLLKFSLTISSCLICFG). The Lumenal segment spans residues 1189 to 1228 (FTLQSFCDSSRDRNLTNCSSVMLPSNDDRAPAWFEDFANG). N-linked (GlcNAc...) asparagine glycosylation is found at Asn-1202 and Asn-1205. A helical transmembrane segment spans residues 1229–1249 (LLSAQKLTAALIVLHTVFISI). The Cytoplasmic segment spans residues 1250–1261 (THVHRTKPLWRK). Residues 1262–1282 (SPLTNLWWAVTVPVVLLGQVV) traverse the membrane as a helical segment. Over 1283–1306 (QTAVDLQLWTHRDSHVHFGLEDVP) the chain is Lumenal. Residues 1307 to 1327 (LLTWLLGCLSLVLVVVTNEIV) traverse the membrane as a helical segment. The Cytoplasmic portion of the chain corresponds to 1328-1356 (KLHEIRVRVRYQKRQKLQFETKLGMNSPF). The short motif at 1351–1353 (GMN) is the GMN; metal-binding motif element.

As to quaternary structure, forms homooligomers. Expressed ubiquitously.

It localises to the endoplasmic reticulum membrane. In terms of biological role, could function in the uptake of Mg(2+) from the cytosol into the endoplasmic reticulum and regulate intracellular Mg(2+) homeostasis. In Homo sapiens (Human), this protein is Transmembrane protein 94.